Here is a 390-residue protein sequence, read N- to C-terminus: Galactokinase (390 aa).

Glutamate 35–aspartate 38 provides a ligand contact to substrate. Glycine 125–serine 131 is an ATP binding site. Positions 131 and 163 each coordinate Mg(2+). Aspartate 175 functions as the Proton acceptor in the catalytic mechanism. Residue tyrosine 224 participates in substrate binding.

This sequence belongs to the GHMP kinase family. GalK subfamily.

It is found in the cytoplasm. The enzyme catalyses alpha-D-galactose + ATP = alpha-D-galactose 1-phosphate + ADP + H(+). It functions in the pathway carbohydrate metabolism; galactose metabolism. Catalyzes the transfer of the gamma-phosphate of ATP to D-galactose to form alpha-D-galactose-1-phosphate (Gal-1-P). In Proteus mirabilis (strain HI4320), this protein is Galactokinase.